A 297-amino-acid chain; its full sequence is Ribosomal RNA small subunit methyltransferase H (297 aa).

S-adenosyl-L-methionine contacts are provided by residues 34–36 (AGH), D54, F88, D106, and Q113. Residues 272–297 (PLTAGEEETDRNPRARSAKLRAAEKK) form a disordered region.

It belongs to the methyltransferase superfamily. RsmH family.

The protein resides in the cytoplasm. The enzyme catalyses cytidine(1402) in 16S rRNA + S-adenosyl-L-methionine = N(4)-methylcytidine(1402) in 16S rRNA + S-adenosyl-L-homocysteine + H(+). Functionally, specifically methylates the N4 position of cytidine in position 1402 (C1402) of 16S rRNA. In Acidobacterium capsulatum (strain ATCC 51196 / DSM 11244 / BCRC 80197 / JCM 7670 / NBRC 15755 / NCIMB 13165 / 161), this protein is Ribosomal RNA small subunit methyltransferase H.